Reading from the N-terminus, the 295-residue chain is Acetyl-coenzyme A carboxylase carboxyl transferase subunit beta (295 aa).

A CoA carboxyltransferase N-terminal domain is found at 25-294 (VWTKCTSCEQ…PFNAEELSDT (270 aa)). Residues C29, C32, C48, and C51 each coordinate Zn(2+). A C4-type zinc finger spans residues 29-51 (CTSCEQVLYRDELKRHLEVCPKC).

Belongs to the AccD/PCCB family. Acetyl-CoA carboxylase is a heterohexamer composed of biotin carboxyl carrier protein (AccB), biotin carboxylase (AccC) and two subunits each of ACCase subunit alpha (AccA) and ACCase subunit beta (AccD). Zn(2+) is required as a cofactor.

Its subcellular location is the cytoplasm. The enzyme catalyses N(6)-carboxybiotinyl-L-lysyl-[protein] + acetyl-CoA = N(6)-biotinyl-L-lysyl-[protein] + malonyl-CoA. It functions in the pathway lipid metabolism; malonyl-CoA biosynthesis; malonyl-CoA from acetyl-CoA: step 1/1. Component of the acetyl coenzyme A carboxylase (ACC) complex. Biotin carboxylase (BC) catalyzes the carboxylation of biotin on its carrier protein (BCCP) and then the CO(2) group is transferred by the transcarboxylase to acetyl-CoA to form malonyl-CoA. This chain is Acetyl-coenzyme A carboxylase carboxyl transferase subunit beta, found in Mannheimia succiniciproducens (strain KCTC 0769BP / MBEL55E).